We begin with the raw amino-acid sequence, 173 residues long: Acireductone dioxygenase (173 aa).

Residues 1–20 (MKVYEYDNSTEDQREDHDSG) form a disordered region. Residues His-81, His-83, Glu-87, and His-126 each coordinate Fe(2+). The Ni(2+) site is built by His-81, His-83, Glu-87, and His-126.

The protein belongs to the acireductone dioxygenase (ARD) family. It depends on Fe(2+) as a cofactor. Ni(2+) serves as cofactor.

Its subcellular location is the cytoplasm. The protein localises to the nucleus. It carries out the reaction 1,2-dihydroxy-5-(methylsulfanyl)pent-1-en-3-one + O2 = 4-methylsulfanyl-2-oxobutanoate + formate + 2 H(+). It catalyses the reaction 1,2-dihydroxy-5-(methylsulfanyl)pent-1-en-3-one + O2 = 3-(methylsulfanyl)propanoate + CO + formate + 2 H(+). It functions in the pathway amino-acid biosynthesis; L-methionine biosynthesis via salvage pathway; L-methionine from S-methyl-5-thio-alpha-D-ribose 1-phosphate: step 5/6. Its function is as follows. Catalyzes 2 different reactions between oxygen and the acireductone 1,2-dihydroxy-3-keto-5-methylthiopentene (DHK-MTPene) depending upon the metal bound in the active site. Fe-containing acireductone dioxygenase (Fe-ARD) produces formate and 2-keto-4-methylthiobutyrate (KMTB), the alpha-ketoacid precursor of methionine in the methionine recycle pathway. Ni-containing acireductone dioxygenase (Ni-ARD) produces methylthiopropionate, carbon monoxide and formate, and does not lie on the methionine recycle pathway. This Tuber melanosporum (strain Mel28) (Perigord black truffle) protein is Acireductone dioxygenase.